Here is a 398-residue protein sequence, read N- to C-terminus: Phosphoglycerate kinase (398 aa).

Substrate contacts are provided by residues 21-23 (DIN), Arg-36, 59-62 (HFGR), Arg-118, and Arg-151. ATP-binding positions include Lys-201, Glu-323, and 353-356 (GGDT).

Belongs to the phosphoglycerate kinase family. As to quaternary structure, monomer.

Its subcellular location is the cytoplasm. It catalyses the reaction (2R)-3-phosphoglycerate + ATP = (2R)-3-phospho-glyceroyl phosphate + ADP. It participates in carbohydrate degradation; glycolysis; pyruvate from D-glyceraldehyde 3-phosphate: step 2/5. The polypeptide is Phosphoglycerate kinase (Ruegeria pomeroyi (strain ATCC 700808 / DSM 15171 / DSS-3) (Silicibacter pomeroyi)).